Here is a 248-residue protein sequence, read N- to C-terminus: 4-hydroxy-tetrahydrodipicolinate reductase (248 aa).

NAD(+) is bound by residues 9–14, 77–79, and 104–107; these read GAKGRV, GTT, and APNF. H134 (proton donor/acceptor) is an active-site residue. H135 contributes to the (S)-2,3,4,5-tetrahydrodipicolinate binding site. The active-site Proton donor is K138. 144 to 145 lines the (S)-2,3,4,5-tetrahydrodipicolinate pocket; it reads GT.

It belongs to the DapB family.

The protein localises to the cytoplasm. The catalysed reaction is (S)-2,3,4,5-tetrahydrodipicolinate + NAD(+) + H2O = (2S,4S)-4-hydroxy-2,3,4,5-tetrahydrodipicolinate + NADH + H(+). It carries out the reaction (S)-2,3,4,5-tetrahydrodipicolinate + NADP(+) + H2O = (2S,4S)-4-hydroxy-2,3,4,5-tetrahydrodipicolinate + NADPH + H(+). It participates in amino-acid biosynthesis; L-lysine biosynthesis via DAP pathway; (S)-tetrahydrodipicolinate from L-aspartate: step 4/4. Catalyzes the conversion of 4-hydroxy-tetrahydrodipicolinate (HTPA) to tetrahydrodipicolinate. The polypeptide is 4-hydroxy-tetrahydrodipicolinate reductase (Corynebacterium glutamicum (strain R)).